A 73-amino-acid chain; its full sequence is Hypotensin-like peptide (73 aa).

A signal peptide spans 1–25; it reads MKMMIAIVFVSILLLMFSLSSTAMG.

In terms of tissue distribution, expressed by the venom gland.

The protein localises to the secreted. In terms of biological role, may potentiate the hypotensive effect of bradykinin. The polypeptide is Hypotensin-like peptide (Tityus serrulatus (Brazilian scorpion)).